Here is a 144-residue protein sequence, read N- to C-terminus: Large ribosomal subunit protein uL15 (144 aa).

The interval Met-1–Leu-57 is disordered. Residues Arg-21–Ala-31 are compositionally biased toward gly residues.

Belongs to the universal ribosomal protein uL15 family. In terms of assembly, part of the 50S ribosomal subunit.

Binds to the 23S rRNA. This Paraburkholderia xenovorans (strain LB400) protein is Large ribosomal subunit protein uL15.